The sequence spans 126 residues: Holo-[acyl-carrier-protein] synthase (126 aa).

Residues Asp9 and Glu58 each contribute to the Mg(2+) site.

The protein belongs to the P-Pant transferase superfamily. AcpS family. Mg(2+) is required as a cofactor.

It localises to the cytoplasm. The enzyme catalyses apo-[ACP] + CoA = holo-[ACP] + adenosine 3',5'-bisphosphate + H(+). Its function is as follows. Transfers the 4'-phosphopantetheine moiety from coenzyme A to a Ser of acyl-carrier-protein. This chain is Holo-[acyl-carrier-protein] synthase, found in Photobacterium profundum (strain SS9).